Consider the following 488-residue polypeptide: Sucrose phosphorylase (488 aa).

Residues D50, H88, 191-193 (RLD), E233, 290-291 (HD), 341-344 (DLYQ), and R398 each bind sucrose. The active-site Nucleophile is the D193. E233 functions as the Proton donor in the catalytic mechanism.

The protein belongs to the glycosyl hydrolase 13 family. Sucrose phosphorylase subfamily.

It catalyses the reaction sucrose + phosphate = D-fructose + alpha-D-glucose 1-phosphate. The sequence is that of Sucrose phosphorylase from Agrobacterium vitis (Rhizobium vitis).